Here is a 179-residue protein sequence, read N- to C-terminus: Large ribosomal subunit protein uL5 (179 aa).

This sequence belongs to the universal ribosomal protein uL5 family. Part of the 50S ribosomal subunit; part of the 5S rRNA/L5/L18/L25 subcomplex. Contacts the 5S rRNA and the P site tRNA. Forms a bridge to the 30S subunit in the 70S ribosome.

Its function is as follows. This is one of the proteins that bind and probably mediate the attachment of the 5S RNA into the large ribosomal subunit, where it forms part of the central protuberance. In the 70S ribosome it contacts protein S13 of the 30S subunit (bridge B1b), connecting the 2 subunits; this bridge is implicated in subunit movement. Contacts the P site tRNA; the 5S rRNA and some of its associated proteins might help stabilize positioning of ribosome-bound tRNAs. The polypeptide is Large ribosomal subunit protein uL5 (Hamiltonella defensa subsp. Acyrthosiphon pisum (strain 5AT)).